A 932-amino-acid polypeptide reads, in one-letter code: von Willebrand factor A domain-containing protein DDB_G0292028 (932 aa).

The interval 1-49 is disordered; that stretch reads MNFIKKVIGGGSSKSKTDIKIEDEQHEQQHEQQHEKQQIPDKISTSKVN. A compositionally biased stretch (basic and acidic residues) spans 15–39; that stretch reads SKTDIKIEDEQHEQQHEQQHEKQQI. The region spanning 95-222 is the VIT domain; that stretch reads LTSPGLNTKV…DVTVNITITS (128 aa). Residues 342-521 enclose the VWFA domain; it reads EFIFVLDCSG…IAMQPTLSNI (180 aa). Disordered stretches follow at residues 661–752 and 800–834; these read QQIN…SQAQ and TSQISQSSRECRSKKSSSPTIQKSSSLPSRPSTSS. Residues 677–686 show a composition bias toward polar residues; sequence TRVQGSSSVF. Low complexity predominate over residues 815 to 834; sequence SSSPTIQKSSSLPSRPSTSS.

The chain is von Willebrand factor A domain-containing protein DDB_G0292028 from Dictyostelium discoideum (Social amoeba).